The chain runs to 631 residues: tRNA uridine 5-carboxymethylaminomethyl modification enzyme MnmG (631 aa).

Position 15–20 (15–20 (GAGHAG)) interacts with FAD. Residues 214 to 233 (YSKTEEEPGDKEPRHFSFTS) are disordered. 276–290 (GPRYCPSIETKVVRF) is an NAD(+) binding site.

It belongs to the MnmG family. Homodimer. Heterotetramer of two MnmE and two MnmG subunits. FAD serves as cofactor.

Its subcellular location is the cytoplasm. Functionally, NAD-binding protein involved in the addition of a carboxymethylaminomethyl (cmnm) group at the wobble position (U34) of certain tRNAs, forming tRNA-cmnm(5)s(2)U34. This chain is tRNA uridine 5-carboxymethylaminomethyl modification enzyme MnmG, found in Lactobacillus delbrueckii subsp. bulgaricus (strain ATCC 11842 / DSM 20081 / BCRC 10696 / JCM 1002 / NBRC 13953 / NCIMB 11778 / NCTC 12712 / WDCM 00102 / Lb 14).